The primary structure comprises 441 residues: Glutamyl-tRNA reductase (441 aa).

Substrate is bound by residues 49–52, S110, 115–117, and Q121; these read TCNR and EPQ. Residue C50 is the Nucleophile of the active site. 190-195 is a binding site for NADP(+); the sequence is GAGEMA.

This sequence belongs to the glutamyl-tRNA reductase family. In terms of assembly, homodimer.

It catalyses the reaction (S)-4-amino-5-oxopentanoate + tRNA(Glu) + NADP(+) = L-glutamyl-tRNA(Glu) + NADPH + H(+). Its pathway is porphyrin-containing compound metabolism; protoporphyrin-IX biosynthesis; 5-aminolevulinate from L-glutamyl-tRNA(Glu): step 1/2. Catalyzes the NADPH-dependent reduction of glutamyl-tRNA(Glu) to glutamate 1-semialdehyde (GSA). This Sulfurihydrogenibium sp. (strain YO3AOP1) protein is Glutamyl-tRNA reductase.